The primary structure comprises 992 residues: Aminopeptidase Q (992 aa).

Residues 2–13 lie on the Cytoplasmic side of the membrane; the sequence is GPPSSSGFYVSR. Residues 14 to 34 traverse the membrane as a helical; Signal-anchor for type II membrane protein segment; that stretch reads AVALLLAALAAALLLALAVLA. Topologically, residues 35-992 are extracellular; sequence ALYGRCARVQ…RMTAWLRKNT (958 aa). A disordered region spans residues 48–92; sequence LHHGGVPDAASSPRGTQEEQLPTWPPRPTREPAGTATPGHWRPPG. An N-linked (GlcNAc...) asparagine glycan is attached at Asn-133. A substrate-binding site is contributed by Glu-241. Asn-262, Asn-289, Asn-347, and Asn-361 each carry an N-linked (GlcNAc...) asparagine glycan. Residue 380 to 384 coordinates substrate; sequence SAMEN. His-416 is a Zn(2+) binding site. The active-site Proton acceptor is the Glu-417. His-420 and Glu-439 together coordinate Zn(2+). A glycan (N-linked (GlcNAc...) asparagine) is linked at Asn-489. Residue Tyr-505 is the Proton donor of the active site. N-linked (GlcNAc...) asparagine glycosylation is found at Asn-584, Asn-602, Asn-609, Asn-655, Asn-811, Asn-850, and Asn-889.

Belongs to the peptidase M1 family. Requires Zn(2+) as cofactor. Expressed in skin. Expression levels do not differ between dark and light skin areas.

It is found in the membrane. Its function is as follows. Metalloprotease which may be important for placentation by regulating biological activity of key peptides at the embryo-maternal interface. Involved in coat pigmentation patterns. During skin development, may be required to establish the periodicity of tabby markings, initiating a pre-pattern at or before hair follicle development. The chain is Aminopeptidase Q (LVRN) from Acinonyx jubatus (Cheetah).